The sequence spans 1368 residues: Protein suppressor 2 of zeste (1368 aa).

Residues 35–74 (CRLCRGYMIDPTTVDYCYHTYCRSCILKHLLRAVYCPECK) form an RING-type zinc finger. Disordered regions lie at residues 245 to 321 (SRIN…FKSL), 448 to 628 (QPLQ…QQQQ), 640 to 718 (TLPT…AVPQ), 861 to 903 (AGGK…KRSC), 935 to 1001 (ALSG…NGTA), 1057 to 1103 (SANP…STSN), 1116 to 1141 (ISANSNGGPSTTSGSNSNGTTNGDDL), 1161 to 1193 (AASSGNGSGSTSSSSAKPKNANALVRPQNASVR), 1211 to 1271 (STAA…KKPT), and 1298 to 1322 (VLSSNAAKSPELAKTTTAVALRPEP). Residues 449 to 461 (PLQQSASNPDSKY) are compositionally biased toward polar residues. The segment covering 462 to 495 (SPNASPMSSCSSSTNGSSSSLGTADASTSTSTSS) has biased composition (low complexity). Over residues 496-506 (SHRKRKKKHSK) the composition is skewed to basic residues. Composition is skewed to low complexity over residues 599–628 (AEPEQQQQQQQQQQQPQQQQQQQQQQQQQQ) and 672–689 (PKQQQQQMPQQPQAVLQQ). 2 stretches are compositionally biased toward polar residues: residues 936-953 (LSGQRNNKGNSSNSNAYR) and 962-977 (LRNTAAPQHSFPSKSS). Low complexity-rich tracts occupy residues 1078–1099 (NNNNNNNNNNNNNNNNNNNNNN), 1119–1138 (NSNGGPSTTSGSNSNGTTNG), 1161–1183 (AASSGNGSGSTSSSSAKPKNANA), and 1231–1263 (STSNPGSLSPTNTSSSSSSSSSGSSGCSAATSP).

Its subcellular location is the nucleus. In terms of biological role, regulates expression of the homeotic selector genes by influencing higher-order chromatin structure through interaction with other proteins. The chain is Protein suppressor 2 of zeste (Su(z)2) from Drosophila melanogaster (Fruit fly).